Consider the following 366-residue polypeptide: Mitogen-activated protein kinase sakA (366 aa).

A Protein kinase domain is found at 20–299 (YTDLQPVGMG…AGEALAHEYL (280 aa)). Residues 26 to 34 (VGMGAFGLV) and Lys-49 each bind ATP. The active-site Proton acceptor is Asp-141. Thr-171 is subject to Phosphothreonine. Residues 171–173 (TGY) carry the TXY motif. Tyr-173 bears the Phosphotyrosine mark.

The protein belongs to the protein kinase superfamily. Ser/Thr protein kinase family. MAP kinase subfamily. HOG1 sub-subfamily. In terms of assembly, interacts with the AGC kinase ypkA. Interacts with sakA upon osmotic and cell wall stresses. Mg(2+) is required as a cofactor. In terms of processing, dually phosphorylated on Thr-171 and Tyr-173, which activates the enzyme. Environmental stresses such as high temperature, osmotic stress, cold stress or ethanol stress modulate the activation of sakA via phosphorylation.

The protein resides in the cytoplasm. It is found in the nucleus. The enzyme catalyses L-seryl-[protein] + ATP = O-phospho-L-seryl-[protein] + ADP + H(+). It carries out the reaction L-threonyl-[protein] + ATP = O-phospho-L-threonyl-[protein] + ADP + H(+). Its activity is regulated as follows. Activated by tyrosine and threonine phosphorylation. Deactivated by protein phosphatase 2C homolog 2 ptcB. Functionally, proline-directed serine/threonine-protein kinase involved in a signal transduction pathway that is activated by changes in the osmolarity of the extracellular environment. Controls osmotic regulation of transcription of target genes. Involved in environmental stress response. With mpkC, plays a redundant or cooperative role in the conidial stress resistance. Also plays a supportive role in osmotic stress adaptation when sakA is deficient. Involved in paradoxical growth, the cell wall integrity (CWI) pathway and biofilm formation. Also collaborates with mpkC to allow ful virulence in a neutropenic murine model ofinvasive pulmonary aspergillosis. MpkC and sakA have both independent and collaborative functions during the transcriptional response to transient osmotic stress and sakA not only seems to modulate pathways involved in nucleotide, fatty acid, nitrogen and organic acid biosynthesis but is also important for the activation of genes involved in mitochondrial and endoplasmic reticulum functions. The polypeptide is Mitogen-activated protein kinase sakA (Aspergillus fumigatus (strain ATCC MYA-4609 / CBS 101355 / FGSC A1100 / Af293) (Neosartorya fumigata)).